The following is a 302-amino-acid chain: NAD kinase 2 (302 aa).

The active-site Proton acceptor is Asp78. Residues Asp78–Gly79, Asn152–Glu153, Asp182, Thr193–Ser198, and Ala217 each bind NAD(+).

This sequence belongs to the NAD kinase family. The cofactor is a divalent metal cation.

Its subcellular location is the cytoplasm. The catalysed reaction is NAD(+) + ATP = ADP + NADP(+) + H(+). Its function is as follows. Involved in the regulation of the intracellular balance of NAD and NADP, and is a key enzyme in the biosynthesis of NADP. Catalyzes specifically the phosphorylation on 2'-hydroxyl of the adenosine moiety of NAD to yield NADP. The protein is NAD kinase 2 of Prochlorococcus marinus (strain SARG / CCMP1375 / SS120).